Consider the following 337-residue polypeptide: Ribonucleoside-diphosphate reductase small subunit (337 aa).

Residues 1–22 (MDPAVSPASTDPLDTHASGAGA) are disordered. The Fe cation site is built by Asp91, Glu121, and His124. Residue Tyr128 is part of the active site. Residues 177–197 (FILMILIEGVFFAASFAAIAY) form a helical membrane-spanning segment. Fe cation is bound by residues Glu184, Glu218, and His221.

The protein belongs to the ribonucleoside diphosphate reductase small chain family. In terms of assembly, heterotetramer composed of a homodimer of the large subunit (R1) and a homodimer of the small subunit (R2). Larger multisubunit protein complex are also active, composed of (R1)n(R2)n. Fe cation is required as a cofactor.

It localises to the host membrane. The catalysed reaction is a 2'-deoxyribonucleoside 5'-diphosphate + [thioredoxin]-disulfide + H2O = a ribonucleoside 5'-diphosphate + [thioredoxin]-dithiol. Its function is as follows. Ribonucleoside-diphosphate reductase holoenzyme provides the precursors necessary for viral DNA synthesis. Allows virus growth in non-dividing cells, as well as reactivation from latency in infected hosts. Catalyzes the biosynthesis of deoxyribonucleotides from the corresponding ribonucleotides. The polypeptide is Ribonucleoside-diphosphate reductase small subunit (Human herpesvirus 2 (strain 333) (HHV-2)).